The sequence spans 235 residues: Uridylate kinase (235 aa).

Lys8–Gly11 is an ATP binding site. Position 49 (Gly49) interacts with UMP. ATP-binding residues include Gly50 and Arg54. Thr131–Thr138 serves as a coordination point for UMP. Positions 159, 165, and 168 each coordinate ATP.

The protein belongs to the UMP kinase family. In terms of assembly, homohexamer.

It localises to the cytoplasm. The catalysed reaction is UMP + ATP = UDP + ADP. It participates in pyrimidine metabolism; CTP biosynthesis via de novo pathway; UDP from UMP (UMPK route): step 1/1. With respect to regulation, inhibited by UTP. Its function is as follows. Catalyzes the reversible phosphorylation of UMP to UDP. The sequence is that of Uridylate kinase from Mycoplasma pneumoniae (strain ATCC 29342 / M129 / Subtype 1) (Mycoplasmoides pneumoniae).